Here is a 308-residue protein sequence, read N- to C-terminus: Aspartate carbamoyltransferase catalytic subunit (308 aa).

Positions 57 and 58 each coordinate carbamoyl phosphate. K86 contacts L-aspartate. Carbamoyl phosphate-binding residues include R107, H135, and Q138. The L-aspartate site is built by R168 and R228. Carbamoyl phosphate-binding residues include L267 and P268.

This sequence belongs to the aspartate/ornithine carbamoyltransferase superfamily. ATCase family. In terms of assembly, heterododecamer (2C3:3R2) of six catalytic PyrB chains organized as two trimers (C3), and six regulatory PyrI chains organized as three dimers (R2).

It carries out the reaction carbamoyl phosphate + L-aspartate = N-carbamoyl-L-aspartate + phosphate + H(+). It functions in the pathway pyrimidine metabolism; UMP biosynthesis via de novo pathway; (S)-dihydroorotate from bicarbonate: step 2/3. Its function is as follows. Catalyzes the condensation of carbamoyl phosphate and aspartate to form carbamoyl aspartate and inorganic phosphate, the committed step in the de novo pyrimidine nucleotide biosynthesis pathway. In Leptospira borgpetersenii serovar Hardjo-bovis (strain JB197), this protein is Aspartate carbamoyltransferase catalytic subunit.